Consider the following 234-residue polypeptide: Purine nucleoside phosphorylase DeoD-type (234 aa).

An a purine D-ribonucleoside-binding site is contributed by H4. Phosphate-binding positions include G20, R24, R43, and 87–90; that span reads RIGS. A purine D-ribonucleoside contacts are provided by residues E162, 179 to 181, and 203 to 204; these read EME and SD. D204 acts as the Proton donor in catalysis.

It belongs to the PNP/UDP phosphorylase family. Homohexamer; trimer of homodimers.

It catalyses the reaction a purine D-ribonucleoside + phosphate = a purine nucleobase + alpha-D-ribose 1-phosphate. It carries out the reaction a purine 2'-deoxy-D-ribonucleoside + phosphate = a purine nucleobase + 2-deoxy-alpha-D-ribose 1-phosphate. Its function is as follows. Catalyzes the reversible phosphorolytic breakdown of the N-glycosidic bond in the beta-(deoxy)ribonucleoside molecules, with the formation of the corresponding free purine bases and pentose-1-phosphate. The polypeptide is Purine nucleoside phosphorylase DeoD-type (Roseobacter denitrificans (strain ATCC 33942 / OCh 114) (Erythrobacter sp. (strain OCh 114))).